A 329-amino-acid polypeptide reads, in one-letter code: Glycerol-3-phosphate dehydrogenase [NAD(P)+] (329 aa).

NADPH contacts are provided by Trp-11, Arg-30, and Lys-103. Positions 103, 132, and 134 each coordinate sn-glycerol 3-phosphate. Ala-136 contacts NADPH. Sn-glycerol 3-phosphate contacts are provided by Lys-187, Asp-240, Ser-250, Arg-251, and Asn-252. The active-site Proton acceptor is the Lys-187. Arg-251 provides a ligand contact to NADPH. NADPH is bound by residues Val-275 and Glu-277.

It belongs to the NAD-dependent glycerol-3-phosphate dehydrogenase family.

It is found in the cytoplasm. It carries out the reaction sn-glycerol 3-phosphate + NAD(+) = dihydroxyacetone phosphate + NADH + H(+). The enzyme catalyses sn-glycerol 3-phosphate + NADP(+) = dihydroxyacetone phosphate + NADPH + H(+). Its pathway is membrane lipid metabolism; glycerophospholipid metabolism. Its function is as follows. Catalyzes the reduction of the glycolytic intermediate dihydroxyacetone phosphate (DHAP) to sn-glycerol 3-phosphate (G3P), the key precursor for phospholipid synthesis. The sequence is that of Glycerol-3-phosphate dehydrogenase [NAD(P)+] from Nitrosomonas eutropha (strain DSM 101675 / C91 / Nm57).